Here is a 566-residue protein sequence, read N- to C-terminus: F-box/WD repeat-containing protein 5 (566 aa).

Residues 3-49 (EGGTPLLPDSLVYQIFLSLGPADVLAAGLVCRQWQAVSRDEFLWREQ) enclose the F-box domain. WD repeat units follow at residues 83 to 125 (VEVQ…DLTI), 126 to 178 (SLLH…LDSF), 179 to 238 (ALLS…VKRL), and 239 to 281 (FKIQ…RIFD). The residue at position 151 (S151) is a Phosphoserine; by PLK4. S284 bears the Phosphoserine mark. Positions 303–311 (RHFLDRVLE) match the D-box motif. WD repeat units follow at residues 394-447 (ALDH…DLLV), 458-501 (RALR…RHYN), and 502-539 (ICLA…KAWR).

It belongs to the FBXW5 family. As to quaternary structure, part of the SCF (SKP1-CUL1-F-box) E3 ubiquitin-protein ligase complex SCF(FBXW5) composed of CUL1, SKP1, RBX1 and FBXW5. Component of the DCX(FBXW5) E3 ubiquitin ligase complex, at least composed of (CUL4A or CUL4B), DDB1, FBXW5 and RBX1. Interacts with CDC20, EPS8, TSC1, TSC2 and SASS6. Interacts with TNFAIP8L1; TNFAIP8L1 competes with TSC2 to bind FBXW5 increasing TSC2 stability by preventing its ubiquitination. Post-translationally, phosphorylated at Ser-151 by PLK4 during the G1/S transition, leading to inhibit its ability to ubiquitinate SASS6. In terms of processing, ubiquitinated and degraded by the APC/C complex during mitosis and G1 phase.

The protein resides in the cytoplasm. Its pathway is protein modification; protein ubiquitination. In terms of biological role, substrate recognition component of both SCF (SKP1-CUL1-F-box protein) and DCX (DDB1-CUL4-X-box) E3 ubiquitin-protein ligase complexes. Substrate recognition component of the SCF(FBXW5) E3 ubiquitin-protein ligase complex which mediates the ubiquitination and subsequent proteasomal degradation of SASS6 during S phase, leading to prevent centriole reduplication. The SCF(FBXW5) complex also mediates ubiquitination and degradation of actin-regulator EPS8 during G2 phase, leading to the transient degradation of EPS8 and subsequent cell shape changes required to allow mitotic progression. Substrate-specific adapter of the DCX(FBXW5) E3 ubiquitin-protein ligase complex which mediates the polyubiquitination and subsequent degradation of TSC2. May also act as a negative regulator of MAP3K7/TAK1 signaling in the interleukin-1B (IL1B) signaling pathway. This chain is F-box/WD repeat-containing protein 5 (FBXW5), found in Homo sapiens (Human).